The sequence spans 416 residues: MSINWLTHPFEELSNLKHSLDETLKNWTEPAPTAATSMDWGWKPRMDVCENKDYYKIILELPSFNKDEIEVQVNGRFLSIKGQKIEHTTDEWKYHRRERYSGGEFHRAVALPEGIDGSSIQAKFQSGVLLLLIPKTGGKTSQHISLFGREEHGNKRNVIDLEEKERKRRMEESDPMLGRRWGTGRSLFSGSKLNNQNDTMYRKPSASDLRLVKQMETKERERRIRDTKGETEKKKNALKVSRYIKSLGMNPRSTLRRGGREMEKIIHLEERERQARIRDKGRMRQQQALAKKVSNLIKHSGGAARLRHTGFNYSTITKGYNTNKTKFDRFGKENDSFGGFNINKSFTNQFKGFGKNSGGKSINITTGGFKAPSQFNKFTHNLEEKERQRRLNDKKGQNDAKRLAAEISHMIGNAHF.

Residues 37–150 (SMDWGWKPRM…SQHISLFGRE (114 aa)) enclose the sHSP domain. A disordered region spans residues 216 to 235 (ETKERERRIRDTKGETEKKK).

Belongs to the small heat shock protein (HSP20) family.

The chain is Heat shock protein DDB_G0280215 from Dictyostelium discoideum (Social amoeba).